A 147-amino-acid chain; its full sequence is Hemoglobin subunit epsilon (147 aa).

The Globin domain occupies 3 to 147 (HLTAEEKAAI…VAIALGHKYH (145 aa)). Residues S14 and S51 each carry the phosphoserine modification. Residues H64 and H93 each contribute to the heme b site.

It belongs to the globin family. In terms of assembly, heterotetramer of two alpha chains and two epsilon chains in early embryonic hemoglobin Gower-2; two zeta chains and two epsilon chains in early embryonic hemoglobin Gower-1. Red blood cells.

In terms of biological role, the epsilon chain is a beta-type chain of early mammalian embryonic hemoglobin. The chain is Hemoglobin subunit epsilon (HBE1) from Ateles belzebuth (White-bellied spider monkey).